A 289-amino-acid chain; its full sequence is NFU1 iron-sulfur cluster scaffold homolog, mitochondrial (289 aa).

A mitochondrion-targeting transit peptide spans 1-56 (MAKLISYAKGGFLRNTRLTSRAVPQVYQHATSSRGFVHLTSSVAQSSAIHVSTPST). The interval 183-251 (IKELLDTRIR…IPEVESVEQV (69 aa)) is nifU. [4Fe-4S] cluster-binding residues include Cys-220 and Cys-223. The tract at residues 267–289 (ERNLKQKDTSSTAPVGIGGGPAN) is disordered.

Belongs to the NifU family.

Its subcellular location is the mitochondrion. Its function is as follows. Molecular scaffold for [Fe-S] cluster assembly of mitochondrial iron-sulfur proteins. In Drosophila willistoni (Fruit fly), this protein is NFU1 iron-sulfur cluster scaffold homolog, mitochondrial.